A 502-amino-acid chain; its full sequence is UDP-N-acetylmuramoylalanine--D-glutamate ligase (502 aa).

136–142 (GTNGKTT) lines the ATP pocket.

Belongs to the MurCDEF family.

The protein localises to the cytoplasm. It carries out the reaction UDP-N-acetyl-alpha-D-muramoyl-L-alanine + D-glutamate + ATP = UDP-N-acetyl-alpha-D-muramoyl-L-alanyl-D-glutamate + ADP + phosphate + H(+). The protein operates within cell wall biogenesis; peptidoglycan biosynthesis. Functionally, cell wall formation. Catalyzes the addition of glutamate to the nucleotide precursor UDP-N-acetylmuramoyl-L-alanine (UMA). This chain is UDP-N-acetylmuramoylalanine--D-glutamate ligase, found in Corynebacterium jeikeium (strain K411).